The primary structure comprises 174 residues: Small ribosomal subunit protein uS4 (174 aa).

In terms of domain architecture, S4 RNA-binding spans 105–169 (RRLQTVAYRK…SPLADDLHPE (65 aa)).

The protein belongs to the universal ribosomal protein uS4 family. In terms of assembly, part of the 30S ribosomal subunit. Contacts protein S5. The interaction surface between S4 and S5 is involved in control of translational fidelity.

In terms of biological role, one of the primary rRNA binding proteins, it binds directly to 16S rRNA where it nucleates assembly of the body of the 30S subunit. Its function is as follows. With S5 and S12 plays an important role in translational accuracy. This Natronomonas pharaonis (strain ATCC 35678 / DSM 2160 / CIP 103997 / JCM 8858 / NBRC 14720 / NCIMB 2260 / Gabara) (Halobacterium pharaonis) protein is Small ribosomal subunit protein uS4.